The following is a 26-amino-acid chain: DSPGGASDAQKQHDVNSILXKVYXEI.

This sequence belongs to the tyrosinase family. Hemocyanin subfamily. In terms of tissue distribution, hemolymph.

It is found in the secreted. Its subcellular location is the extracellular space. Its function is as follows. Hemocyanins are copper-containing oxygen carriers occurring freely dissolved in the hemolymph of many mollusks and arthropods. The sequence is that of Hemocyanin subunit B from Carcinus maenas (Common shore crab).